The primary structure comprises 314 residues: tRNA-cytidine(32) 2-sulfurtransferase (314 aa).

Positions 57-62 (SGGKDS) match the PP-loop motif motif. 3 residues coordinate [4Fe-4S] cluster: Cys132, Cys135, and Cys223.

It belongs to the TtcA family. In terms of assembly, homodimer. It depends on Mg(2+) as a cofactor. The cofactor is [4Fe-4S] cluster.

It localises to the cytoplasm. It carries out the reaction cytidine(32) in tRNA + S-sulfanyl-L-cysteinyl-[cysteine desulfurase] + AH2 + ATP = 2-thiocytidine(32) in tRNA + L-cysteinyl-[cysteine desulfurase] + A + AMP + diphosphate + H(+). It participates in tRNA modification. Its function is as follows. Catalyzes the ATP-dependent 2-thiolation of cytidine in position 32 of tRNA, to form 2-thiocytidine (s(2)C32). The sulfur atoms are provided by the cysteine/cysteine desulfurase (IscS) system. This chain is tRNA-cytidine(32) 2-sulfurtransferase, found in Alkalilimnicola ehrlichii (strain ATCC BAA-1101 / DSM 17681 / MLHE-1).